Reading from the N-terminus, the 463-residue chain is Kynureninase 2 (463 aa).

Pyridoxal 5'-phosphate contacts are provided by residues Leu134, Thr135, Phe162–Asp165, Asp247, His250, and Tyr272. Lys273 is modified (N6-(pyridoxal phosphate)lysine). Pyridoxal 5'-phosphate-binding residues include Trp312 and Asn340.

This sequence belongs to the kynureninase family. As to quaternary structure, homodimer. Pyridoxal 5'-phosphate is required as a cofactor.

The protein localises to the cytoplasm. It carries out the reaction L-kynurenine + H2O = anthranilate + L-alanine + H(+). It catalyses the reaction 3-hydroxy-L-kynurenine + H2O = 3-hydroxyanthranilate + L-alanine + H(+). It participates in amino-acid degradation; L-kynurenine degradation; L-alanine and anthranilate from L-kynurenine: step 1/1. The protein operates within cofactor biosynthesis; NAD(+) biosynthesis; quinolinate from L-kynurenine: step 2/3. Its function is as follows. Catalyzes the cleavage of L-kynurenine (L-Kyn) and L-3-hydroxykynurenine (L-3OHKyn) into anthranilic acid (AA) and 3-hydroxyanthranilic acid (3-OHAA), respectively. In Aspergillus terreus (strain NIH 2624 / FGSC A1156), this protein is Kynureninase 2 (bna5-2).